Consider the following 541-residue polypeptide: Formimidoyltransferase-cyclodeaminase (541 aa).

The segment at 1–181 (MSQLVECVPN…GATVTGARKF (181 aa)) is formiminotransferase N-subdomain. Histidine 82 (for formimidoyltransferase activity) is an active-site residue. A folate-binding site is contributed by 163–172 (GPSSFVPSWG). Residues 182–326 (LIAFNINLLS…PKERIIEYLV (145 aa)) are formiminotransferase C-subdomain. The linker stretch occupies residues 327–334 (PDSGPEQS). The interval 335–541 (LLDASLRAFV…VLGSLEARKE (207 aa)) is cyclodeaminase/cyclohydrolase. Aspartate 412 functions as the For cyclodeaminase activity in the catalytic mechanism. A Phosphoserine modification is found at serine 520.

In the C-terminal section; belongs to the cyclodeaminase/cyclohydrolase family. The protein in the N-terminal section; belongs to the formiminotransferase family. In terms of assembly, homooctamer, including four polyglutamate binding sites. The subunits are arranged as a tetramer of dimers, and form a planar ring-shaped structure. In terms of tissue distribution, specifically expressed in liver (at protein level).

It localises to the cytoplasm. The protein resides in the cytosol. Its subcellular location is the golgi apparatus. It is found in the cytoskeleton. The protein localises to the microtubule organizing center. It localises to the centrosome. The protein resides in the centriole. It catalyses the reaction 5-formimidoyltetrahydrofolate + L-glutamate = N-formimidoyl-L-glutamate + (6S)-5,6,7,8-tetrahydrofolate. The enzyme catalyses 5-formimidoyltetrahydrofolate + 2 H(+) = (6R)-5,10-methenyltetrahydrofolate + NH4(+). The protein operates within amino-acid degradation; L-histidine degradation into L-glutamate; L-glutamate from N-formimidoyl-L-glutamate (transferase route): step 1/1. Folate-dependent enzyme, that displays both transferase and deaminase activity. Serves to channel one-carbon units from formiminoglutamate to the folate pool. In terms of biological role, binds and promotes bundling of vimentin filaments originating from the Golgi. This chain is Formimidoyltransferase-cyclodeaminase (Ftcd), found in Rattus norvegicus (Rat).